A 254-amino-acid chain; its full sequence is Phosphoribosylaminoimidazole-succinocarboxamide synthase (254 aa).

Belongs to the SAICAR synthetase family.

It catalyses the reaction 5-amino-1-(5-phospho-D-ribosyl)imidazole-4-carboxylate + L-aspartate + ATP = (2S)-2-[5-amino-1-(5-phospho-beta-D-ribosyl)imidazole-4-carboxamido]succinate + ADP + phosphate + 2 H(+). It functions in the pathway purine metabolism; IMP biosynthesis via de novo pathway; 5-amino-1-(5-phospho-D-ribosyl)imidazole-4-carboxamide from 5-amino-1-(5-phospho-D-ribosyl)imidazole-4-carboxylate: step 1/2. This is Phosphoribosylaminoimidazole-succinocarboxamide synthase from Rhizobium meliloti (strain 1021) (Ensifer meliloti).